Consider the following 62-residue polypeptide: Large ribosomal subunit protein bL28 (62 aa).

It belongs to the bacterial ribosomal protein bL28 family.

The polypeptide is Large ribosomal subunit protein bL28 (Clostridioides difficile (strain 630) (Peptoclostridium difficile)).